The primary structure comprises 360 residues: COP9 signalosome complex subunit 5 (360 aa).

One can recognise an MPN domain in the interval alanine 60 to aspartate 197. Residues histidine 143, histidine 145, and aspartate 156 each coordinate Zn(2+). The JAMM motif motif lies at histidine 143–aspartate 156. Disordered regions lie at residues leucine 293–serine 315 and serine 341–alanine 360. Positions serine 341 to aspartate 350 are enriched in polar residues.

This sequence belongs to the peptidase M67A family. CSN5 subfamily. Component of the CSN complex, probably composed of CSN1, CSN2, CSN3, CSN4, CSN5, CSN6, CSN7 and CSN8. Interacts with MCM2.

In terms of biological role, probable protease subunit of the COP9 signalosome complex (CSN), a complex involved in various cellular and developmental processes such as photomorphogenesis and response to hormones. The CSN complex is an essential regulator of the ubiquitin (Ubl) conjugation pathway by mediating the deneddylation of the cullin subunits of SCF-type E3 ligase complexes, leading to decrease the Ubl ligase activity of SCF. Involved in early response to iron deficiency. In Oryza sativa subsp. japonica (Rice), this protein is COP9 signalosome complex subunit 5.